The primary structure comprises 69 residues: MFGLGGQELILILMIILLLFGAKKLPELAKGLGKGMKEFKKAQNEMEDEFNKAMDDETPKKKDFGPDRE.

A helical transmembrane segment spans residues M1–G21. Positions E49 to E69 are disordered.

It belongs to the TatA/E family. Forms a complex with TatC.

It is found in the cell inner membrane. Its function is as follows. Part of the twin-arginine translocation (Tat) system that transports large folded proteins containing a characteristic twin-arginine motif in their signal peptide across membranes. TatA could form the protein-conducting channel of the Tat system. The polypeptide is Sec-independent protein translocase protein TatA (Chlorobium luteolum (strain DSM 273 / BCRC 81028 / 2530) (Pelodictyon luteolum)).